Reading from the N-terminus, the 596-residue chain is Transcription factor EGL1 (596 aa).

The region spanning 401 to 450 (EETGNHALSEKKRREKLNERFMTLRSIIPSISKIDKVSILDDTIEYLQDL) is the bHLH domain.

Efficient DNA binding requires dimerization with another bHLH protein. Homodimer and heterodimer with GL3. Interacts with CPC, MYB0/GL1, MYB5, MYB23, MYB113, MYB114, MYB75/PAP1, MYB90/PAP2, TT2, TRY, TTG1 and MYB66/WER. As to expression, ubiquitous with higher levels in buds and flowers. Specifically localized in developing root hair cells. Expressed in epidermal root hair cells (trichoblasts) and moves to root hairless cells (atrichoblasts) by a cell-to-cell movement through plasmodesmata (at protein level).

It is found in the nucleus. Transcription activator, when associated with MYB75/PAP1, MYB90/PAP2 or TT2. Involved in epidermal cell fate specification. Negatively regulates stomata formation but promotes trichome formation. Together with MYB66/WER, promotes the formation of non-hair cells in root epidermis cells in the N position. Whereas together with CPC, promotes the formation of hair cells in root epidermis cells in the H position by inhibiting non-hair cell formation. Also seems to play a role in the activation of anthocyanin biosynthesis, probably together with MYB75/PAP1. Involved in seed mucilage production. Activates the transcription of GL2. The sequence is that of Transcription factor EGL1 (BHLH2) from Arabidopsis thaliana (Mouse-ear cress).